A 372-amino-acid chain; its full sequence is MKTKNVNLLFALVAVLLFGFSCFCISRMNQTNNQLINCRNHVLEFKETMLRLKNKSENNHQNLVKVLHQLKHKVAPAKPSGSILEKKVNMLDQDETVFNQFEVLKFFLPHLRTAGNIYPDIAIGRQRAGVSFALGITTIDRGNHTYLKQTLTSVLSRMTPEEEEDSVVIVSVADTDENYLKSVVHMVKTRFRKQVQSGALEVISIPALFYPQTLLEKKTTKNAKNWQIKQVLDFCILMLYAQPKATYYLQLEDDIVAKKMYFTKMKDFVNSVTSKDWFYIEFSVLGFIGKLFRSKDLMDFVHFFLIFYRAKPIDVLLDDIALLRMCSFGGPLRSCLQLKREVRVQYKPSLFQHVGTHSSFPGREQHLKDHYY.

Residues 1–8 are Cytoplasmic-facing; it reads MKTKNVNL. A helical; Signal-anchor for type II membrane protein membrane pass occupies residues 9-29; that stretch reads LFALVAVLLFGFSCFCISRMN. Residues 30-372 are Lumenal-facing; the sequence is QTNNQLINCR…REQHLKDHYY (343 aa). N-linked (GlcNAc...) asparagine glycosylation is found at N54 and N143.

Belongs to the glycosyltransferase 54 family. May self-associate; specifically in the endoplasmic reticulum prior to its translocation to the Golgi. Interacts with MGAT1, MGAT3 and MAN2A2; may interact with MGTA1 specifically in the Golgi. In terms of processing, N-glycosylated. O-glycosylated; further modified with terminal sialic acid residues. As to expression, testis.

It localises to the golgi apparatus membrane. The protein localises to the endoplasmic reticulum membrane. Functionally, may play a role in male spermatogenesis. In vitro acts as inhibitor of MGAT1 activity causing cell surface proteins to carry mainly high mannose N-glycans. The function is mediated by its lumenal domain and occurs specifically in the Golgi. A catalytic glucosyltransferase activity is not detected. May be involved in regulation of Sertoli-germ cell interactions during specific stages of spermatogenesis. The chain is Alpha-1,3-mannosyl-glycoprotein 4-beta-N-acetylglucosaminyltransferase-like protein MGAT4D from Rattus norvegicus (Rat).